We begin with the raw amino-acid sequence, 113 residues long: MHELSLCQSAVEIIQQQAEQHGVARVTGVWLEIGALSCVEERAVRFSFDIACQGTLAQGCELHIDYRPAQAWCWDCSQVVEILRHDAQCPHCHGDRLRVDTGDSLKVKSIEVE.

The Ni(2+) site is built by H2 and E3. Zn(2+) contacts are provided by C73, C76, C89, and C92.

It belongs to the HypA/HybF family. HybF subfamily.

Functionally, involved in the maturation of [NiFe] hydrogenases. Required for nickel insertion into the metal center of the hydrogenase. In Salmonella typhi, this protein is Hydrogenase maturation factor HybF.